The sequence spans 379 residues: Forkhead box protein E1 (379 aa).

Positions 1–11 are enriched in polar residues; sequence MTAESQQSPTR. A disordered region spans residues 1 to 65; sequence MTAESQQSPT…RRRKRPLQKG (65 aa). Positions 54–63 are enriched in basic residues; the sequence is KGRRRKRPLQ. Positions 66-160 form a DNA-binding region, fork-head; that stretch reads KPPYSYIALI…DSGSFLRRRK (95 aa). Residues 239-265 form a disordered region; the sequence is HSGSEHAQPPNRSISPEVNSTSSSSCN. The span at 251–265 shows a compositional bias: low complexity; sequence SISPEVNSTSSSSCN.

As to expression, first expressed at late neural tube and early tailbud stages in the hypophyseal placode. Expression continues in the developing pituitary at late tailbud stages. As development progresses, expressed in the mesoderm of the branchial arches. At stage 38, expressed in the developing thyroid and in the pharyngeal endoderm.

The protein localises to the nucleus. In terms of biological role, transcription factor that binds consensus sites on a variety of gene promoters and activate their transcription. This chain is Forkhead box protein E1, found in Xenopus laevis (African clawed frog).